The following is a 152-amino-acid chain: Endoribonuclease YbeY (152 aa).

3 residues coordinate Zn(2+): histidine 113, histidine 117, and histidine 123.

It belongs to the endoribonuclease YbeY family. Zn(2+) is required as a cofactor.

It is found in the cytoplasm. Single strand-specific metallo-endoribonuclease involved in late-stage 70S ribosome quality control and in maturation of the 3' terminus of the 16S rRNA. The protein is Endoribonuclease YbeY of Paracidovorax citrulli (strain AAC00-1) (Acidovorax citrulli).